Here is an 84-residue protein sequence, read N- to C-terminus: Small nuclear ribonucleoprotein E (84 aa).

The Sm domain maps to 13–84 (INFIFKLLQQ…GDNITLIQAI (72 aa)).

Belongs to the snRNP Sm proteins family. As to quaternary structure, component of the Sm core complex, present in spliceosomal snRNP U1, U2, U4/U6 and U5. The core complex contains smb1, smd1, smd2, smd3, sme1, smf1 and smg1 (Sm proteins B, D1, D2, D3, E, F and G, respectively), and is probably a heptameric ring structure.

Its subcellular location is the cytoplasm. The protein localises to the nucleus. In terms of biological role, involved in pre-mRNA splicing. Binds and is required for the stability of snRNA U1, U2, U4 and U5 which contain a highly conserved structural motif called the Sm binding site. Involved in cap modification. This chain is Small nuclear ribonucleoprotein E, found in Schizosaccharomyces pombe (strain 972 / ATCC 24843) (Fission yeast).